A 378-amino-acid polypeptide reads, in one-letter code: Ferredoxin--NADP reductase, root isozyme 1, chloroplastic (378 aa).

A chloroplast-targeting transit peptide spans 1–65; the sequence is MALSTTPSQM…KRSTICMSLQ (65 aa). Residues 93 to 221 form the FAD-binding FR-type domain; that stretch reads KEPYTATIVS…TGPSGKVMLL (129 aa). C196 and C201 are disulfide-bonded. Residue S197 is modified to Phosphoserine. Phosphothreonine is present on T229. 231–249 serves as a coordination point for NADP(+); it reads IMIATGTGVAPYRGYLRRM. A coiled-coil region spans residues 349–373; that stretch reads LKRVAEERGESWEQKLTQLRKNKQW.

This sequence belongs to the ferredoxin--NADP reductase type 1 family. The cofactor is FAD. As to expression, expressed in shoots and roots. Less abundant in roots than RFNR2.

The protein localises to the plastid. The protein resides in the chloroplast. It catalyses the reaction 2 reduced [2Fe-2S]-[ferredoxin] + NADP(+) + H(+) = 2 oxidized [2Fe-2S]-[ferredoxin] + NADPH. Its function is as follows. Maintains the supply of reduced ferredoxin under non-photosynthetic conditions. In Arabidopsis thaliana (Mouse-ear cress), this protein is Ferredoxin--NADP reductase, root isozyme 1, chloroplastic (RFNR1).